The sequence spans 210 residues: Orotate phosphoribosyltransferase (210 aa).

Residues Arg94, Lys98, His100, and 120–128 each bind 5-phospho-alpha-D-ribose 1-diphosphate; that span reads EDLISTGGS. Ser124 is an orotate binding site.

It belongs to the purine/pyrimidine phosphoribosyltransferase family. PyrE subfamily. Homodimer. Requires Mg(2+) as cofactor.

It catalyses the reaction orotidine 5'-phosphate + diphosphate = orotate + 5-phospho-alpha-D-ribose 1-diphosphate. The protein operates within pyrimidine metabolism; UMP biosynthesis via de novo pathway; UMP from orotate: step 1/2. Functionally, catalyzes the transfer of a ribosyl phosphate group from 5-phosphoribose 1-diphosphate to orotate, leading to the formation of orotidine monophosphate (OMP). In Bacillus cytotoxicus (strain DSM 22905 / CIP 110041 / 391-98 / NVH 391-98), this protein is Orotate phosphoribosyltransferase.